We begin with the raw amino-acid sequence, 464 residues long: Argininosuccinate lyase (464 aa).

The protein belongs to the lyase 1 family. Argininosuccinate lyase subfamily.

The protein resides in the cytoplasm. The enzyme catalyses 2-(N(omega)-L-arginino)succinate = fumarate + L-arginine. Its pathway is amino-acid biosynthesis; L-arginine biosynthesis; L-arginine from L-ornithine and carbamoyl phosphate: step 3/3. The protein is Argininosuccinate lyase of Ectopseudomonas mendocina (strain ymp) (Pseudomonas mendocina).